Reading from the N-terminus, the 1241-residue chain is eIF-2-alpha kinase GCN2 (1241 aa).

Positions 1–15 (MGRSSSKKKKKRGGS) are enriched in basic residues. The interval 1 to 33 (MGRSSSKKKKKRGGSGRRGQLKDHGSNADEDNE) is disordered. Residues 37–148 (EEITALSAIF…EAAQEFLSEI (112 aa)) form the RWD domain. The segment at 253–321 (PIAKLNTVQE…SLGSWSSDSL (69 aa)) is disordered. 2 stretches are compositionally biased toward low complexity: residues 267–276 (DTSISSFDSS) and 307–321 (NSESESLGSWSSDSL). Residues 425-731 (FEELKPLGQG…ATELLKHAFP (307 aa)) enclose the Protein kinase domain. ATP contacts are provided by residues 431–439 (LGQGGFGHV) and lysine 454. Aspartate 586 serves as the catalytic Proton acceptor. Positions 819 to 1219 (IPMRLLSDCP…ELKKEKVVGR (401 aa)) are histidyl-tRNA synthetase-like.

The protein belongs to the protein kinase superfamily. Ser/Thr protein kinase family. GCN2 subfamily. Homodimer; homodimerization is important for kinase activation by uncharged tRNAs. As to expression, expressed in roots, leaves, stems, buds, flowers, siliques and seedlings.

Its subcellular location is the cytoplasm. It carries out the reaction L-seryl-[protein] + ATP = O-phospho-L-seryl-[protein] + ADP + H(+). It catalyses the reaction L-threonyl-[protein] + ATP = O-phospho-L-threonyl-[protein] + ADP + H(+). The kinase activity is stimulated upon binding to uncharged tRNAs. Metabolic-stress sensing protein kinase that phosphorylates the alpha subunit of eukaryotic translation initiation factor 2 eIF-2-alpha in response to low amino acid availability. Plays a role as an activator of the general amino acid control pathway required for adapatation to amino acid starvation. Converts phosphorylated eIF-2-alpha either to a competitive inhibitor of translation initiation, leading to a global protein synthesis repression, and thus to a reduced overall utilization of amino acids, or to a translational initiation activation of specific mRNAs, and hence allowing reprogramming of amino acid biosynthetic gene expression to alleviate nutrient depletion. Binds uncharged tRNAs. The protein is eIF-2-alpha kinase GCN2 of Arabidopsis thaliana (Mouse-ear cress).